Here is a 1357-residue protein sequence, read N- to C-terminus: DNA-directed RNA polymerase subunit beta (1357 aa).

Belongs to the RNA polymerase beta chain family. As to quaternary structure, the RNAP catalytic core consists of 2 alpha, 1 beta, 1 beta' and 1 omega subunit. When a sigma factor is associated with the core the holoenzyme is formed, which can initiate transcription.

The enzyme catalyses RNA(n) + a ribonucleoside 5'-triphosphate = RNA(n+1) + diphosphate. DNA-dependent RNA polymerase catalyzes the transcription of DNA into RNA using the four ribonucleoside triphosphates as substrates. This is DNA-directed RNA polymerase subunit beta from Neorickettsia sennetsu (Ehrlichia sennetsu).